Reading from the N-terminus, the 266-residue chain is Undecaprenyl-diphosphatase (266 aa).

The next 8 helical transmembrane spans lie at Met-1–Ile-21, Gln-39–Phe-59, Trp-87–Ile-107, Leu-111–Ala-131, Val-144–Thr-164, Ala-183–Val-203, Ala-218–Leu-238, and Met-246–Leu-266.

The protein belongs to the UppP family.

It localises to the cell inner membrane. It carries out the reaction di-trans,octa-cis-undecaprenyl diphosphate + H2O = di-trans,octa-cis-undecaprenyl phosphate + phosphate + H(+). Its function is as follows. Catalyzes the dephosphorylation of undecaprenyl diphosphate (UPP). Confers resistance to bacitracin. The protein is Undecaprenyl-diphosphatase of Shewanella piezotolerans (strain WP3 / JCM 13877).